A 463-amino-acid polypeptide reads, in one-letter code: Probable multidrug resistance protein YoeA (463 aa).

12 helical membrane passes run 24–44 (LFLVPLLLSNVLQSVGQLVGM), 56–76 (VAAVSSFFPLFFLLISFTIGI), 106–126 (FTFLLGVVLAVIGSIFTLDIL), 143–163 (ARILFYAMPFMFLYFAYTTFL), 177–197 (IVSTVINIALLPVLILGMFGF), 202–222 (IYGSAYATVISTIATFLVLMV), 256–276 (VPASINMILVSLSEIAVISFV), 293–313 (VASYVQMPAVSLGIAVSIFAA), 330–350 (VGIWLNYIIGGVLIILIYVFS), 370–390 (LLMITLWSYLLFGNAQIISAT), 397–417 (VLWPTVISIFAIWGVEVPVAF), and 427–447 (ILGVWVGYPAAFAVSLLLIYG).

The protein belongs to the multi antimicrobial extrusion (MATE) (TC 2.A.66.1) family.

Its subcellular location is the cell membrane. The chain is Probable multidrug resistance protein YoeA (yoeA) from Bacillus subtilis (strain 168).